A 226-amino-acid polypeptide reads, in one-letter code: Biosynthetic peptidoglycan transglycosylase (226 aa).

A helical membrane pass occupies residues 5-25; that stretch reads IGVTVLAVVGLLLLPYLLTPL.

This sequence belongs to the glycosyltransferase 51 family.

The protein resides in the cell inner membrane. The enzyme catalyses [GlcNAc-(1-&gt;4)-Mur2Ac(oyl-L-Ala-gamma-D-Glu-L-Lys-D-Ala-D-Ala)](n)-di-trans,octa-cis-undecaprenyl diphosphate + beta-D-GlcNAc-(1-&gt;4)-Mur2Ac(oyl-L-Ala-gamma-D-Glu-L-Lys-D-Ala-D-Ala)-di-trans,octa-cis-undecaprenyl diphosphate = [GlcNAc-(1-&gt;4)-Mur2Ac(oyl-L-Ala-gamma-D-Glu-L-Lys-D-Ala-D-Ala)](n+1)-di-trans,octa-cis-undecaprenyl diphosphate + di-trans,octa-cis-undecaprenyl diphosphate + H(+). Its pathway is cell wall biogenesis; peptidoglycan biosynthesis. Functionally, peptidoglycan polymerase that catalyzes glycan chain elongation from lipid-linked precursors. This is Biosynthetic peptidoglycan transglycosylase from Nitrobacter hamburgensis (strain DSM 10229 / NCIMB 13809 / X14).